Consider the following 120-residue polypeptide: Large ribosomal subunit protein uL18 (120 aa).

A compositionally biased stretch (basic and acidic residues) spans Met1–Glu10. The segment at Met1–Arg26 is disordered.

The protein belongs to the universal ribosomal protein uL18 family. As to quaternary structure, part of the 50S ribosomal subunit; part of the 5S rRNA/L5/L18/L25 subcomplex. Contacts the 5S and 23S rRNAs.

This is one of the proteins that bind and probably mediate the attachment of the 5S RNA into the large ribosomal subunit, where it forms part of the central protuberance. The sequence is that of Large ribosomal subunit protein uL18 from Nostoc sp. (strain PCC 7120 / SAG 25.82 / UTEX 2576).